Consider the following 586-residue polypeptide: uncharacterized protein (586 aa).

The interval 1 to 115 (MRVLVAETGR…NTEKLAGRDD (115 aa)) is disordered. Positions 8 to 20 (TGREDNVSVHSRE) are enriched in basic and acidic residues. Positions 21 to 31 (VSVNGSDSGTG) are enriched in polar residues. The span at 35 to 44 (YKLETDDEHP) shows a compositional bias: basic and acidic residues. The segment covering 76–107 (TGMNTEYNDDNSSLVNTPRDSTTYAETNSPNT) has biased composition (polar residues). WD repeat units follow at residues 184–223 (QFKE…ERRE), 253–291 (GHNA…SLAV), 293–333 (RHNE…ILHW), 335–374 (ELEY…YVSS), 387–430 (CRVT…LVLK), and 432–474 (SDAH…LINA).

It localises to the cytoplasm. The protein resides in the nucleus. This is an uncharacterized protein from Schizosaccharomyces pombe (strain 972 / ATCC 24843) (Fission yeast).